We begin with the raw amino-acid sequence, 389 residues long: 1-acyl-sn-glycerol-3-phosphate acyltransferase 2 (389 aa).

A helical membrane pass occupies residues 2 to 22; sequence VIAAAVIVPLGLLFFISGLAV. The HXXXXD motif signature appears at 91-96; sequence HRSDID. 2 consecutive transmembrane segments (helical) span residues 305–325 and 333–353; these read LAVV…FLHW and KGIT…QILI. The tract at residues 357-389 is disordered; the sequence is QSERSTPAKVVPAKPKDNHHPESSSQTETEKEK. The span at 370-389 shows a compositional bias: basic and acidic residues; it reads KPKDNHHPESSSQTETEKEK.

This sequence belongs to the 1-acyl-sn-glycerol-3-phosphate acyltransferase family. Interacts with GPAT9 and DGAT1. As to expression, present in roots, leaves, stems, floral buds and siliques (at protein level). Widely expressed. In contrast to LPAT1, it is not expressed at higher level in leaves.

It is found in the endoplasmic reticulum membrane. The catalysed reaction is a 1-acyl-sn-glycero-3-phosphate + an acyl-CoA = a 1,2-diacyl-sn-glycero-3-phosphate + CoA. It functions in the pathway phospholipid metabolism; CDP-diacylglycerol biosynthesis; CDP-diacylglycerol from sn-glycerol 3-phosphate: step 2/3. Its function is as follows. Converts lysophosphatidic acid (LPA) into phosphatidic acid by incorporating acyl moiety at the 2 position. Has preference for C-18-CoA substrates compared to C-16-CoA substrates. Required for female but not male gametophyte development. This is 1-acyl-sn-glycerol-3-phosphate acyltransferase 2 (LPAT2) from Arabidopsis thaliana (Mouse-ear cress).